A 103-amino-acid polypeptide reads, in one-letter code: Small ribosomal subunit protein uS10 (103 aa).

The protein belongs to the universal ribosomal protein uS10 family. Part of the 30S ribosomal subunit.

In terms of biological role, involved in the binding of tRNA to the ribosomes. In Shewanella amazonensis (strain ATCC BAA-1098 / SB2B), this protein is Small ribosomal subunit protein uS10.